The sequence spans 425 residues: Trigger factor (425 aa).

The 86-residue stretch at 163-248 (GDTAVIDFEG…VHEIKTKELP (86 aa)) folds into the PPIase FKBP-type domain.

The protein belongs to the FKBP-type PPIase family. Tig subfamily.

It localises to the cytoplasm. It carries out the reaction [protein]-peptidylproline (omega=180) = [protein]-peptidylproline (omega=0). Functionally, involved in protein export. Acts as a chaperone by maintaining the newly synthesized protein in an open conformation. Functions as a peptidyl-prolyl cis-trans isomerase. This Bacillus cereus (strain Q1) protein is Trigger factor.